A 271-amino-acid chain; its full sequence is Mannosyl-3-phosphoglycerate phosphatase (271 aa).

Aspartate 13 serves as the catalytic Nucleophile. Mg(2+) contacts are provided by aspartate 13, aspartate 15, and aspartate 214.

The protein belongs to the HAD-like hydrolase superfamily. MPGP family. Mg(2+) is required as a cofactor.

It localises to the cytoplasm. It catalyses the reaction 2-O-(alpha-D-mannosyl)-3-phosphoglycerate + H2O = (2R)-2-O-(alpha-D-mannosyl)-glycerate + phosphate. The sequence is that of Mannosyl-3-phosphoglycerate phosphatase from Escherichia coli O127:H6 (strain E2348/69 / EPEC).